A 333-amino-acid polypeptide reads, in one-letter code: MADKSTEVEKAIDPIIDLGNLLFIDREPIQGDASEGLEERARKNTQLLFNNIWQLEQKRVEEAIIVTLPPATYRLPREKRLPEKKEPTKWEKYAAEKGIEKRKKDKKVFDEATKEWKPTYGYRRGNDDTKDWLIEIPDNAEDPNKDFFAERREKKKERVAKNDMQRMKNLARQMKTTVKSGPSTEKMIGVGVDAKEKSKQQVRFAVDRAKLATASAGKFQEGLKGEKANVKTGKKRKFEANEAPVSGEKERALQILQRMKSKKAKIVEEKAAAVAGPLREKKEKSERKGAKDQTRQKSQIHRQQWFKNKVDGKKKGTGGAGKKGANKAKARKG.

Disordered regions lie at residues 227–248 (KANV…VSGE) and 271–333 (AAAV…ARKG). Over residues 278–295 (LREKKEKSERKGAKDQTR) the composition is skewed to basic and acidic residues. The span at 324-333 (GANKAKARKG) shows a compositional bias: basic residues.

This sequence belongs to the RRS1 family.

Its subcellular location is the nucleus. The protein localises to the nucleolus. Involved in ribosomal large subunit assembly. The protein is Ribosome biogenesis regulatory protein homolog of Caenorhabditis elegans.